The following is a 429-amino-acid chain: Histidine--tRNA ligase (429 aa).

Belongs to the class-II aminoacyl-tRNA synthetase family. In terms of assembly, homodimer.

It is found in the cytoplasm. It carries out the reaction tRNA(His) + L-histidine + ATP = L-histidyl-tRNA(His) + AMP + diphosphate + H(+). This Escherichia fergusonii (strain ATCC 35469 / DSM 13698 / CCUG 18766 / IAM 14443 / JCM 21226 / LMG 7866 / NBRC 102419 / NCTC 12128 / CDC 0568-73) protein is Histidine--tRNA ligase.